The sequence spans 325 residues: Transaldolase (325 aa).

The active-site Schiff-base intermediate with substrate is Lys-125.

The protein belongs to the transaldolase family. Type 2 subfamily.

It is found in the cytoplasm. The catalysed reaction is D-sedoheptulose 7-phosphate + D-glyceraldehyde 3-phosphate = D-erythrose 4-phosphate + beta-D-fructose 6-phosphate. It functions in the pathway carbohydrate degradation; pentose phosphate pathway; D-glyceraldehyde 3-phosphate and beta-D-fructose 6-phosphate from D-ribose 5-phosphate and D-xylulose 5-phosphate (non-oxidative stage): step 2/3. Transaldolase is important for the balance of metabolites in the pentose-phosphate pathway. The polypeptide is Transaldolase (Campylobacter jejuni subsp. jejuni serotype O:6 (strain 81116 / NCTC 11828)).